The primary structure comprises 399 residues: Elongation factor Tu (399 aa).

The tr-type G domain maps to 10–209; the sequence is KPHVNIGTIG…AVDDYIPTPV (200 aa). The interval 19-26 is G1; the sequence is GHVDHGKT. 19–26 contributes to the GTP binding site; it reads GHVDHGKT. A Mg(2+)-binding site is contributed by Thr26. A G2 region spans residues 62-66; it reads GITIN. The segment at 83–86 is G3; sequence DCPG. GTP is bound by residues 83–87 and 138–141; these read DCPGH and NKCD. The segment at 138–141 is G4; it reads NKCD. Residues 175-177 form a G5 region; it reads SAY.

It belongs to the TRAFAC class translation factor GTPase superfamily. Classic translation factor GTPase family. EF-Tu/EF-1A subfamily. As to quaternary structure, monomer.

It is found in the cytoplasm. The catalysed reaction is GTP + H2O = GDP + phosphate + H(+). In terms of biological role, GTP hydrolase that promotes the GTP-dependent binding of aminoacyl-tRNA to the A-site of ribosomes during protein biosynthesis. In Bifidobacterium longum (strain DJO10A), this protein is Elongation factor Tu.